The primary structure comprises 425 residues: 26S proteasome regulatory subunit 7 (425 aa).

An ATP-binding site is contributed by 208 to 215 (GPPGTGKT).

The protein belongs to the AAA ATPase family.

The protein localises to the cytoplasm. It is found in the nucleus. Its function is as follows. The 26S proteasome is involved in the ATP-dependent degradation of ubiquitinated proteins. The regulatory (or ATPase) complex confers ATP dependency and substrate specificity to the 26S complex. The chain is 26S proteasome regulatory subunit 7 (RPT1) from Prunus persica (Peach).